Reading from the N-terminus, the 366-residue chain is Quinolinate synthase (366 aa).

Iminosuccinate-binding residues include His-44 and Ser-61. A [4Fe-4S] cluster-binding site is contributed by Cys-108. Iminosuccinate contacts are provided by residues Tyr-139–Asn-141 and Ser-160. Cys-228 provides a ligand contact to [4Fe-4S] cluster. Residues His-254–Glu-256 and Thr-271 each bind iminosuccinate. Cys-318 lines the [4Fe-4S] cluster pocket.

Belongs to the quinolinate synthase family. Type 3 subfamily. The cofactor is [4Fe-4S] cluster.

The protein resides in the cytoplasm. It carries out the reaction iminosuccinate + dihydroxyacetone phosphate = quinolinate + phosphate + 2 H2O + H(+). It functions in the pathway cofactor biosynthesis; NAD(+) biosynthesis; quinolinate from iminoaspartate: step 1/1. In terms of biological role, catalyzes the condensation of iminoaspartate with dihydroxyacetone phosphate to form quinolinate. The sequence is that of Quinolinate synthase from Staphylococcus carnosus (strain TM300).